The primary structure comprises 369 residues: 3,4-dihydroxy-2-butanone 4-phosphate synthase (369 aa).

Residues 1-201 are DHBP synthase; the sequence is MAFDRIEDII…IADLIHYRLS (201 aa). Residues 27–28, aspartate 32, 140–144, and glutamate 164 contribute to the D-ribulose 5-phosphate site; these read RE and RAGHT. Glutamate 28 lines the Mg(2+) pocket. Histidine 143 is a binding site for Mg(2+). The segment at 202–369 is GTP cyclohydrolase II-like; it reads TEHTIVRIGE…EVIESIPFPG (168 aa).

It in the N-terminal section; belongs to the DHBP synthase family. In the C-terminal section; belongs to the GTP cyclohydrolase II family. Mg(2+) is required as a cofactor. The cofactor is Mn(2+).

It catalyses the reaction D-ribulose 5-phosphate = (2S)-2-hydroxy-3-oxobutyl phosphate + formate + H(+). It participates in cofactor biosynthesis; riboflavin biosynthesis; 2-hydroxy-3-oxobutyl phosphate from D-ribulose 5-phosphate: step 1/1. In terms of biological role, catalyzes the conversion of D-ribulose 5-phosphate to formate and 3,4-dihydroxy-2-butanone 4-phosphate. This is 3,4-dihydroxy-2-butanone 4-phosphate synthase (ribB) from Pseudomonas syringae pv. tomato (strain ATCC BAA-871 / DC3000).